The chain runs to 119 residues: Circadian clock oscillator protein KaiB (119 aa).

Belongs to the KaiB family. In terms of assembly, may undergo a major conformational rearrangment; in the free state forms homooligomers. When bound to KaiC switches to a monomeric thioredoxin-fold (KaiB(fs)). The active oscillator complex is probably KaiC(6):KaiB(6).

In terms of biological role, component of the KaiBC clock protein complex, which constitutes the main circadian regulator in cyanobacteria; it may modify the ATPase activity of KaiC. May be a metamorphic protein which reversibly switches between an inactive tetrameric fold and a rare, thioredoxin-like monomeric fold (KaiB(fs)). KaiB(fs) binds phospho-KaiC, and perhaps clock output effectors. The sequence is that of Circadian clock oscillator protein KaiB from Prochlorococcus marinus (strain MIT 9313).